The sequence spans 492 residues: MEPKQTADARDSPPLLVFLEPAAEEVTAHTAPLSPNPQSARAAPGSAVRFFSDSAREEEAGEDEPLLKKSGPVSPRAARKGRTRLSSSSDRENMSGGHVGNGEFNVILDDLEFADIIHRAEQAIESGVFPERISQGSSGSYFVKDPKGKIIGVFKPKSEEPYGHLNPKWTKYFHKICCPCCFGRGCLVPNQGYLSEAGAYLVDEKLGLGVVPKTKVVWLVSETFNYSAIDRAKSRGKKYALEKVPKVGRKFHRIGLPPKVGSFQLFVDGYKEADYWLRKFETDPLPENTRKQLQCQFEKLVILDYVIRNTDRGNDNWLIRYDSQDDDELMEKGDDFPLKDWKEIKEPVIKIAAIDNGLAFPFKHPDEWRAYPFHWAWLPQAKVPFSQETRDLILPRISDMNFVQDLCEDLYELFKTDKGFDKATFEKQMSVMRGQILNLTQALKDGKTPIQLVQMPRVVVERSCSGSQGRIVQMSNAFTQTFHCRKPFFSSW.

The segment covering 1 to 11 (MEPKQTADARD) has biased composition (basic and acidic residues). A disordered region spans residues 1–98 (MEPKQTADAR…SDRENMSGGH (98 aa)). In terms of domain architecture, PI3K/PI4K catalytic spans 127-462 (GVFPERISQG…VQMPRVVVER (336 aa)). The tract at residues 133 to 139 (ISQGSSG) is G-loop. ATP contacts are provided by serine 140 and lysine 155. Residues 160–162 (EPY) are important for substrate binding. The segment at 168–181 (KWTKYFHKICCPCC) is important for interaction with membranes. Residues 264–267 (QLFV) and 278–279 (RK) contribute to the ATP site. The tract at residues 271–279 (KEADYWLRK) is important for interaction with membranes. The interval 308–316 (RNTDRGNDN) is catalytic loop. Residues 353–373 (AIDNGLAFPFKHPDEWRAYPF) are activation loop. Residue aspartate 355 participates in ATP binding. The important for interaction with membranes stretch occupies residues 368–377 (WRAYPFHWAW).

Belongs to the PI3/PI4-kinase family. Type II PI4K subfamily.

It localises to the cytoplasm. Its subcellular location is the cytosol. It is found in the golgi apparatus membrane. The protein localises to the endoplasmic reticulum membrane. The protein resides in the cell membrane. It localises to the early endosome membrane. It catalyses the reaction a 1,2-diacyl-sn-glycero-3-phospho-(1D-myo-inositol) + ATP = a 1,2-diacyl-sn-glycero-3-phospho-(1D-myo-inositol 4-phosphate) + ADP + H(+). Functionally, contributes to the overall PI4-kinase activity of the cell. This contribution may be especially significant in plasma membrane, endosomal and Golgi compartments. The phosphorylation of phosphatidylinositol (PI) to PI4P is the first committed step in the generation of phosphatidylinositol 4,5-bisphosphate (PIP2), a precursor of the second messenger inositol 1,4,5-trisphosphate (InsP3). The protein is Phosphatidylinositol 4-kinase type 2-beta (pi4k2b) of Xenopus tropicalis (Western clawed frog).